The chain runs to 423 residues: Keratin, type I cytoskeletal 18 (423 aa).

The residue at position 2 (Ser2) is an N-acetylserine. The tract at residues 2-71 (SFTTRSTTFS…GLAGMGGVQT (70 aa)) is head. Residues Ser7, Ser11, Ser16, and Ser19 each carry the phosphoserine modification. A phosphoserine; alternate mark is found at Ser31 and Ser32. Residues Ser31 and Ser32 are each glycosylated (O-linked (GlcNAc) serine; alternate). Phosphoserine is present on Ser35. Residue Tyr37 is modified to Phosphotyrosine. Ser43 is subject to Phosphoserine. The residue at position 46 (Arg46) is an Omega-N-methylarginine. Ser50 is subject to Phosphoserine; alternate. Residue Ser50 is glycosylated (O-linked (GlcNAc) serine; alternate). The residue at position 52 (Ser52) is a Phosphoserine; by MAPKAPK2 and MAPKAPK3. Phosphoserine is present on residues Ser57 and Ser60. The tract at residues 62–366 (GLAGMGGVQT…EALLNIKVKL (305 aa)) is necessary for interaction with PNN. Residues 69-121 (VQTEKETMQDLNDRLASYLDKVKNLETENRRLESKIREYLEKRGPQGVRDWGH) are interaction with TRADD. The coil 1A stretch occupies residues 72–107 (EKETMQDLNDRLASYLDKVKNLETENRRLESKIREY). The IF rod domain occupies 72 to 384 (EKETMQDLND…RLLEDGDDFS (313 aa)). A Glycyl lysine isopeptide (Lys-Gly) (interchain with G-Cter in SUMO2) cross-link involves residue Lys73. Ser85 carries the post-translational modification Phosphoserine. The segment at 108-125 (LEKRGPQGVRDWGHYFKT) is linker 1. Residue Lys124 is modified to N6-acetyllysine. Positions 126 to 217 (IEDLRAQIFA…KNHEEEVQGL (92 aa)) are coil 1B. Residues Ser137 and Ser170 each carry the phosphoserine modification. The linker 12 stretch occupies residues 218–241 (EAQIASSGLTVEVDAPKSQDLSKI). Positions 236–384 (QDLSKIMADI…RLLEDGDDFS (149 aa)) are interaction with DNAJB6. Lys240 is covalently cross-linked (Glycyl lysine isopeptide (Lys-Gly) (interchain with G-Cter in SUMO2)). The interval 242–380 (MADIRAQYEQ…ATYRRLLEDG (139 aa)) is coil 2. At Thr295 the chain carries Phosphothreonine. Residues Lys363 and Lys365 each participate in a glycyl lysine isopeptide (Lys-Gly) (interchain with G-Cter in SUMO2) cross-link. Residues 381-423 (DDFSLNDALDSSNSMQTVQRTTTRKVVDGKVVSETNDTRVLRH) form a tail region. A phosphoserine mark is found at Ser384, Ser391, Ser392, and Ser394. Thr397 bears the Phosphothreonine mark. A Glycyl lysine isopeptide (Lys-Gly) (interchain with G-Cter in SUMO2) cross-link involves residue Lys410.

Belongs to the intermediate filament family. As to quaternary structure, heterotetramer of two type I and two type II keratins. KRT18 associates with KRT8. Interacts with PNN and mutated CFTR. Interacts with YWHAE, YWHAH and YWHAZ only when phosphorylated. Interacts with DNAJB6, TCHP and TRADD. Interacts with the thrombin-antithrombin complex. Interacts with FAM83H. Interacts with EPPK1. Interacts with PKP1 and PKP2. In terms of processing, phosphorylation increases by IL-6. Proteolytically cleaved by caspases during epithelial cell apoptosis. Cleavage occurs at Asp-231 by either caspase-3, caspase-6 or caspase-7. Post-translationally, dephosphorylated by ethanol. In terms of processing, O-GlcNAcylation increases solubility, and decreases stability by inducing proteasomal degradation. Expressed on the plasma membrane of hepatocytes and in the narrow apical portions of supporting cells in the vomeronasal sensory epithelium. Detected in the type III alveolar cells of the lung, in the proliferative crypt epithelium of the small intestine and in the older intragemmal cells of the tongue.

It is found in the nucleus matrix. The protein resides in the cytoplasm. It localises to the perinuclear region. The protein localises to the nucleus. Its subcellular location is the nucleolus. Functionally, when phosphorylated, plays a role in filament reorganization. Involved in the delivery of mutated CFTR to the plasma membrane. Together with KRT8, is involved in interleukin-6 (IL-6)-mediated barrier protection. Involved in the uptake of thrombin-antithrombin complexes by hepatic cells. In Rattus norvegicus (Rat), this protein is Keratin, type I cytoskeletal 18.